The sequence spans 227 residues: Phosphoglycolate phosphatase (227 aa).

Asp-11 acts as the Nucleophile in catalysis. Mg(2+) is bound by residues Asp-11, Asp-13, and Asp-176.

The protein belongs to the HAD-like hydrolase superfamily. CbbY/CbbZ/Gph/YieH family. Mg(2+) serves as cofactor.

The enzyme catalyses 2-phosphoglycolate + H2O = glycolate + phosphate. The protein operates within organic acid metabolism; glycolate biosynthesis; glycolate from 2-phosphoglycolate: step 1/1. In terms of biological role, specifically catalyzes the dephosphorylation of 2-phosphoglycolate. Is involved in the dissimilation of the intracellular 2-phosphoglycolate formed during the DNA repair of 3'-phosphoglycolate ends, a major class of DNA lesions induced by oxidative stress. This is Phosphoglycolate phosphatase from Aliivibrio fischeri (strain ATCC 700601 / ES114) (Vibrio fischeri).